The sequence spans 490 residues: Betaine aldehyde dehydrogenase (490 aa).

3 residues coordinate K(+): T26, I27, and D93. 150 to 152 provides a ligand contact to NAD(+); it reads GAW. The active-site Charge relay system is the K162. 176–179 is a binding site for NAD(+); the sequence is KPSE. Residue V180 participates in K(+) binding. 230-233 is an NAD(+) binding site; it reads GVAS. A K(+)-binding site is contributed by L246. E252 serves as the catalytic Proton acceptor. NAD(+) is bound by residues G254, C286, and E387. C286 (nucleophile) is an active-site residue. Position 286 is a cysteine sulfenic acid (-SOH) (C286). K457 and G460 together coordinate K(+). The active-site Charge relay system is E464.

Belongs to the aldehyde dehydrogenase family. As to quaternary structure, dimer of dimers. K(+) serves as cofactor.

The enzyme catalyses betaine aldehyde + NAD(+) + H2O = glycine betaine + NADH + 2 H(+). The protein operates within amine and polyamine biosynthesis; betaine biosynthesis via choline pathway; betaine from betaine aldehyde: step 1/1. Its function is as follows. Involved in the biosynthesis of the osmoprotectant glycine betaine. Catalyzes the irreversible oxidation of betaine aldehyde to the corresponding acid. This chain is Betaine aldehyde dehydrogenase, found in Escherichia coli (strain K12 / DH10B).